The primary structure comprises 196 residues: Phosphate-specific transport system accessory protein PhoU homolog (196 aa).

This sequence belongs to the PhoU family. As to quaternary structure, homodimer.

It localises to the cytoplasm. In terms of biological role, plays a role in the regulation of phosphate uptake. This chain is Phosphate-specific transport system accessory protein PhoU homolog, found in Archaeoglobus fulgidus (strain ATCC 49558 / DSM 4304 / JCM 9628 / NBRC 100126 / VC-16).